Reading from the N-terminus, the 236-residue chain is Phosphoribosylaminoimidazole-succinocarboxamide synthase (236 aa).

This sequence belongs to the SAICAR synthetase family.

The catalysed reaction is 5-amino-1-(5-phospho-D-ribosyl)imidazole-4-carboxylate + L-aspartate + ATP = (2S)-2-[5-amino-1-(5-phospho-beta-D-ribosyl)imidazole-4-carboxamido]succinate + ADP + phosphate + 2 H(+). Its pathway is purine metabolism; IMP biosynthesis via de novo pathway; 5-amino-1-(5-phospho-D-ribosyl)imidazole-4-carboxamide from 5-amino-1-(5-phospho-D-ribosyl)imidazole-4-carboxylate: step 1/2. The polypeptide is Phosphoribosylaminoimidazole-succinocarboxamide synthase (Chlorobium phaeobacteroides (strain DSM 266 / SMG 266 / 2430)).